We begin with the raw amino-acid sequence, 449 residues long: uncharacterized protein (449 aa).

In terms of domain architecture, TRAM spans 3 to 61; it reads VWQQGATIELRIDSLSHTGEGVGRWQDRVVFVADTVPGDRLRVRLTHVKRQYAHGKVLE. [4Fe-4S] cluster is bound by residues cysteine 74, cysteine 80, cysteine 83, and cysteine 161. Residues glutamine 283, tyrosine 312, glutamate 333, and aspartate 378 each coordinate S-adenosyl-L-methionine. Cysteine 405 acts as the Nucleophile in catalysis.

This sequence belongs to the class I-like SAM-binding methyltransferase superfamily. RNA M5U methyltransferase family.

This is an uncharacterized protein from Thermosynechococcus vestitus (strain NIES-2133 / IAM M-273 / BP-1).